Reading from the N-terminus, the 142-residue chain is Hemoglobin subunit alpha-A (142 aa).

The region spanning 2 to 142 is the Globin domain; the sequence is VLSAADKNNV…VGTVLTAKYR (141 aa). Residue H59 coordinates O2. A heme b-binding site is contributed by H88.

Belongs to the globin family. As to quaternary structure, heterotetramer of two alpha chains and two beta chains. As to expression, red blood cells.

Functionally, involved in oxygen transport from the lung to the various peripheral tissues. This chain is Hemoglobin subunit alpha-A (HBAA), found in Meleagris gallopavo (Wild turkey).